Reading from the N-terminus, the 1234-residue chain is ATP-dependent helicase/nuclease subunit A (1234 aa).

Residues 2 to 475 (TQFTTSQQAA…IILAENFRST (474 aa)) enclose the UvrD-like helicase ATP-binding domain. 23 to 30 (ASAGSGKT) serves as a coordination point for ATP. One can recognise a UvrD-like helicase C-terminal domain in the interval 507–806 (YGALDYGDAH…KLMTIHKSKG (300 aa)).

Belongs to the helicase family. AddA subfamily. In terms of assembly, heterodimer of AddA and AddB/RexB. Requires Mg(2+) as cofactor.

It carries out the reaction Couples ATP hydrolysis with the unwinding of duplex DNA by translocating in the 3'-5' direction.. The catalysed reaction is ATP + H2O = ADP + phosphate + H(+). In terms of biological role, the heterodimer acts as both an ATP-dependent DNA helicase and an ATP-dependent, dual-direction single-stranded exonuclease. Recognizes the chi site generating a DNA molecule suitable for the initiation of homologous recombination. The AddA nuclease domain is required for chi fragment generation; this subunit has the helicase and 3' -&gt; 5' nuclease activities. The sequence is that of ATP-dependent helicase/nuclease subunit A from Lacticaseibacillus casei (strain BL23) (Lactobacillus casei).